A 432-amino-acid chain; its full sequence is Adenosylhomocysteinase (432 aa).

Residues 1–24 (MSAYSPLSAQLDADTDVDVESTRT) form a disordered region. Substrate-binding residues include D137 and E162. 163–165 (TTT) provides a ligand contact to NAD(+). The substrate site is built by K192 and D196. NAD(+) contacts are provided by residues N197, 226-231 (GYGYCG), E249, N284, 305-307 (AGH), and N352.

Belongs to the adenosylhomocysteinase family. It depends on NAD(+) as a cofactor.

It is found in the cytoplasm. It catalyses the reaction S-adenosyl-L-homocysteine + H2O = L-homocysteine + adenosine. It participates in amino-acid biosynthesis; L-homocysteine biosynthesis; L-homocysteine from S-adenosyl-L-homocysteine: step 1/1. Functionally, may play a key role in the regulation of the intracellular concentration of adenosylhomocysteine. The sequence is that of Adenosylhomocysteinase from Haloquadratum walsbyi (strain DSM 16790 / HBSQ001).